We begin with the raw amino-acid sequence, 85 residues long: uncharacterized protein (85 aa).

This sequence belongs to the ycf76 family.

It localises to the plastid. The protein resides in the chloroplast. This is an uncharacterized protein from Oryza sativa subsp. japonica (Rice).